A 1044-amino-acid chain; its full sequence is Diacylglycerol lipase-alpha (1044 aa).

At 1–22 the chain is on the cytoplasmic side; it reads MPGIVVFRRRWSVGSDDLVLPA. A helical membrane pass occupies residues 23 to 43; sequence IFLFLLHTTWFVILSVVLFGL. The Extracellular portion of the chain corresponds to 44-60; the sequence is VYNPHEACSLNLVDHGR. The helical transmembrane segment at 61 to 81 threads the bilayer; sequence GYLGILLSCMIAEMAIIWLSM. Residues 82–101 lie on the Cytoplasmic side of the membrane; the sequence is RGGILYTEPRDSMQYVLYVR. The helical transmembrane segment at 102–122 threads the bilayer; the sequence is LAILVIEFIYAIVGIVWLTQY. Over 123–136 the chain is Extracellular; the sequence is YTSCNDLTAKNVTL. Asn-133 carries an N-linked (GlcNAc...) asparagine glycan. The helical transmembrane segment at 137–157 threads the bilayer; it reads GMVVCNWVVILSVCITVLCVF. Residues 158–1044 are Cytoplasmic-facing; sequence DPTGRTFVKL…KQDDLVISAR (887 aa). Active-site charge relay system residues include Ser-472 and Asp-524. Residues Ser-728, Ser-730, Ser-733, Ser-744, Ser-784, Ser-786, Ser-808, Ser-810, Ser-835, Ser-849, and Ser-954 each carry the phosphoserine modification. The segment at 848 to 905 is disordered; the sequence is LSKHSQDTQPLEAALGSGGVTPERPPSAANDEEEAAGGSEGGGVAPRGELALHNGRLG. Positions 1013-1044 are disordered; the sequence is QECLATDKIRTSTPTGHGASPTKQDDLVISAR. Position 1025 is a phosphothreonine (Thr-1025).

This sequence belongs to the AB hydrolase superfamily. Lipase family. Interacts (via C-terminal) with CAMK2A; leading to the phosphorylation and inhibition of DAGLA enzymatic activity. Interacts (via PPXXF motif) with HOMER1 and HOMER2; this interaction is required for DAGLA membrane localization. Ca(2+) is required as a cofactor. In terms of processing, phosphorylated at Ser-784 and Ser-810 by CAMK2A; phosphorylation by CAMK2A inhibits diacylglycerol lipase activity.

The protein localises to the cell membrane. It localises to the cell projection. It is found in the dendritic spine membrane. The protein resides in the postsynaptic density membrane. Its subcellular location is the early endosome membrane. The catalysed reaction is a 1,2-diacyl-sn-glycerol + H2O = a 2-acylglycerol + a fatty acid + H(+). It carries out the reaction 1-octadecanoyl-2-(5Z,8Z,11Z,14Z-eicosatetraenoyl)-sn-glycerol + H2O = 2-(5Z,8Z,11Z,14Z-eicosatetraenoyl)-glycerol + octadecanoate + H(+). It catalyses the reaction 1,2-di-(9Z-octadecenoyl)-sn-glycerol + H2O = 2-(9Z-octadecenoyl)-glycerol + (9Z)-octadecenoate + H(+). The enzyme catalyses 1-(9Z-octadecenoyl)-2-(5Z,8Z,11Z,14Z-eicosatetraenoyl)-sn-glycerol + H2O = 2-(5Z,8Z,11Z,14Z-eicosatetraenoyl)-glycerol + (9Z)-octadecenoate + H(+). The catalysed reaction is 1-(9Z-octadecenoyl)-2-octadecanoyl-sn-glycerol + H2O = 2-octadecanoylglycerol + (9Z)-octadecenoate + H(+). It carries out the reaction 1-(9Z-octadecenoyl)-2-(9Z,12Z-octadecadienoyl)-sn-glycerol + H2O = 2-(9Z,12Z-octadecadienoyl)-glycerol + (9Z)-octadecenoate + H(+). It catalyses the reaction 1-(9Z-octadecenoyl)-2-O-(5Z,8Z,11Z,14Z-eicosatetraenyl)-sn-glycerol + H2O = 2-O-(5Z,8Z,11Z,14Z)-eicosatetraenylglycerol + (9Z)-octadecenoate + H(+). Its activity is regulated as follows. Inhibited by 1,2,3-triazole urea covalent inhibitors KT172, DH376 and DO34. Inhibited by p-hydroxy-mercuri-benzoate and HgCl(2), but not to PMSF. Also inhibited by RHC80267. Diacylglycerol lipase activity is inhibited by the phosphorylation of Ser-784 and Ser-810 by CAMK2A. Serine hydrolase that hydrolyzes arachidonic acid-esterified diacylglycerols (DAGs) to produce the principal endocannabinoid, 2-arachidonoylglycerol (2-AG). Preferentially hydrolyzes sn-1 fatty acids from diacylglycerols (DAG) that contain arachidonic acid (AA) esterified at the sn-2 position to biosynthesize 2-AG. Has negligible activity against other lipids including monoacylglycerols and phospholipids. Plays a key role in regulating 2-AG signaling in the CNS. Controls the activity of 2-AG as a retrograde messenger at neuronal synapses. Supports axonal growth during development and adult neurogenesis. Plays a role for eCB signaling in the physiological regulation of anxiety and depressive behaviors. Also regulates neuroinflammatory responses in the brain, in particular, LPS-induced microglial activation. The polypeptide is Diacylglycerol lipase-alpha (Dagla) (Rattus norvegicus (Rat)).